The primary structure comprises 455 residues: Bifunctional protein GlmU (455 aa).

Residues 1 to 226 form a pyrophosphorylase region; it reads MGLSVVILAA…EFEILGVNDR (226 aa). UDP-N-acetyl-alpha-D-glucosamine-binding positions include 8–11, Lys22, Gln73, 78–79, 99–101, Gly136, Glu151, Asn166, and Asn224; these read LAAG, GT, and YGD. Residue Asp101 coordinates Mg(2+). Asn224 is a Mg(2+) binding site. Residues 227 to 247 form a linker region; the sequence is TQLASLERVWQRNVAEKIMAK. Residues 248-455 are N-acetyltransferase; that stretch reads GVSIADPNRF…WQRSVKKTDK (208 aa). 2 residues coordinate UDP-N-acetyl-alpha-D-glucosamine: Arg330 and Lys348. His360 serves as the catalytic Proton acceptor. Residues Tyr363 and Asn374 each contribute to the UDP-N-acetyl-alpha-D-glucosamine site. Residues Ala377, 383–384, Ser402, Ala420, and Arg437 contribute to the acetyl-CoA site; that span reads NY.

In the N-terminal section; belongs to the N-acetylglucosamine-1-phosphate uridyltransferase family. This sequence in the C-terminal section; belongs to the transferase hexapeptide repeat family. In terms of assembly, homotrimer. Requires Mg(2+) as cofactor.

It localises to the cytoplasm. The catalysed reaction is alpha-D-glucosamine 1-phosphate + acetyl-CoA = N-acetyl-alpha-D-glucosamine 1-phosphate + CoA + H(+). It carries out the reaction N-acetyl-alpha-D-glucosamine 1-phosphate + UTP + H(+) = UDP-N-acetyl-alpha-D-glucosamine + diphosphate. It functions in the pathway nucleotide-sugar biosynthesis; UDP-N-acetyl-alpha-D-glucosamine biosynthesis; N-acetyl-alpha-D-glucosamine 1-phosphate from alpha-D-glucosamine 6-phosphate (route II): step 2/2. The protein operates within nucleotide-sugar biosynthesis; UDP-N-acetyl-alpha-D-glucosamine biosynthesis; UDP-N-acetyl-alpha-D-glucosamine from N-acetyl-alpha-D-glucosamine 1-phosphate: step 1/1. Its pathway is bacterial outer membrane biogenesis; LPS lipid A biosynthesis. Functionally, catalyzes the last two sequential reactions in the de novo biosynthetic pathway for UDP-N-acetylglucosamine (UDP-GlcNAc). The C-terminal domain catalyzes the transfer of acetyl group from acetyl coenzyme A to glucosamine-1-phosphate (GlcN-1-P) to produce N-acetylglucosamine-1-phosphate (GlcNAc-1-P), which is converted into UDP-GlcNAc by the transfer of uridine 5-monophosphate (from uridine 5-triphosphate), a reaction catalyzed by the N-terminal domain. The chain is Bifunctional protein GlmU from Francisella tularensis subsp. tularensis (strain SCHU S4 / Schu 4).